The sequence spans 379 residues: Pectin lyase A (379 aa).

A signal peptide spans 1–20 (MKTTFLVSLATAALSSTAAA). Disulfide bonds link Cys83–Cys102 and Cys92–Cys226. Arg256 is a catalytic residue. Cysteines 323 and 331 form a disulfide.

Belongs to the polysaccharide lyase 1 family.

Its subcellular location is the secreted. The enzyme catalyses Eliminative cleavage of (1-&gt;4)-alpha-D-galacturonan methyl ester to give oligosaccharides with 4-deoxy-6-O-methyl-alpha-D-galact-4-enuronosyl groups at their non-reducing ends.. In terms of biological role, pectinolytic enzymes consist of four classes of enzymes: pectin lyase, polygalacturonase, pectin methylesterase and rhamnogalacturonase. Among pectinolytic enzymes, pectin lyase is the most important in depolymerization of pectin, since it cleaves internal glycosidic bonds of highly methylated pectins. The chain is Pectin lyase A (pelA) from Emericella nidulans (strain FGSC A4 / ATCC 38163 / CBS 112.46 / NRRL 194 / M139) (Aspergillus nidulans).